A 328-amino-acid polypeptide reads, in one-letter code: Malate dehydrogenase (328 aa).

11 to 17 is an NAD(+) binding site; it reads GAAGQIG. Substrate is bound by residues arginine 94 and arginine 100. Residues asparagine 107, glutamine 114, and 131-133 each bind NAD(+); that span reads VGN. 2 residues coordinate substrate: asparagine 133 and arginine 164. Histidine 189 serves as the catalytic Proton acceptor.

Belongs to the LDH/MDH superfamily. MDH type 2 family.

The catalysed reaction is (S)-malate + NAD(+) = oxaloacetate + NADH + H(+). Its function is as follows. Catalyzes the reversible oxidation of malate to oxaloacetate. This Xanthomonas oryzae pv. oryzae (strain PXO99A) protein is Malate dehydrogenase.